The chain runs to 338 residues: Holliday junction branch migration complex subunit RuvB (338 aa).

The interval Ser-4–Tyr-184 is large ATPase domain (RuvB-L). Residues Arg-24, Gly-65, Lys-68, Thr-69, Thr-70, Glu-131–Tyr-133, Arg-174, Tyr-184, and Arg-221 each bind ATP. Residue Thr-69 participates in Mg(2+) binding. The interval His-185–Ala-255 is small ATPAse domain (RuvB-S). The segment at His-258–Ser-338 is head domain (RuvB-H). 3 residues coordinate DNA: Arg-294, Arg-313, and Arg-318.

It belongs to the RuvB family. Homohexamer. Forms an RuvA(8)-RuvB(12)-Holliday junction (HJ) complex. HJ DNA is sandwiched between 2 RuvA tetramers; dsDNA enters through RuvA and exits via RuvB. An RuvB hexamer assembles on each DNA strand where it exits the tetramer. Each RuvB hexamer is contacted by two RuvA subunits (via domain III) on 2 adjacent RuvB subunits; this complex drives branch migration. In the full resolvosome a probable DNA-RuvA(4)-RuvB(12)-RuvC(2) complex forms which resolves the HJ.

It localises to the cytoplasm. It carries out the reaction ATP + H2O = ADP + phosphate + H(+). The RuvA-RuvB-RuvC complex processes Holliday junction (HJ) DNA during genetic recombination and DNA repair, while the RuvA-RuvB complex plays an important role in the rescue of blocked DNA replication forks via replication fork reversal (RFR). RuvA specifically binds to HJ cruciform DNA, conferring on it an open structure. The RuvB hexamer acts as an ATP-dependent pump, pulling dsDNA into and through the RuvAB complex. RuvB forms 2 homohexamers on either side of HJ DNA bound by 1 or 2 RuvA tetramers; 4 subunits per hexamer contact DNA at a time. Coordinated motions by a converter formed by DNA-disengaged RuvB subunits stimulates ATP hydrolysis and nucleotide exchange. Immobilization of the converter enables RuvB to convert the ATP-contained energy into a lever motion, pulling 2 nucleotides of DNA out of the RuvA tetramer per ATP hydrolyzed, thus driving DNA branch migration. The RuvB motors rotate together with the DNA substrate, which together with the progressing nucleotide cycle form the mechanistic basis for DNA recombination by continuous HJ branch migration. Branch migration allows RuvC to scan DNA until it finds its consensus sequence, where it cleaves and resolves cruciform DNA. The protein is Holliday junction branch migration complex subunit RuvB of Dichelobacter nodosus (strain VCS1703A).